Reading from the N-terminus, the 308-residue chain is Pycsar effector protein PaPycTIR (308 aa).

Leu-54–Arg-143 lines the a nucleoside 3',5'-cyclic phosphate pocket. Residues Val-160–Tyr-278 are TIR-like.

Its subcellular location is the cytoplasm. It catalyses the reaction NAD(+) + H2O = ADP-D-ribose + nicotinamide + H(+). In terms of biological role, pycsar (pyrimidine cyclase system for antiphage resistance) provides immunity against bacteriophage. The pyrimidine cyclase (PycC) synthesizes cyclic nucleotides in response to infection; these serve as specific second messenger signals. The signals activate the adjacent effector, leading to bacterial cell death and abortive phage infection. A clade A Pycsar system. Its function is as follows. The effector gene of a two-gene Pycsar system. Expression of this and adjacent uridylate cyclase PaPycC (AC P0DV40) probably confers resistance to bacteriophage. The genes are probably only expressed in response to bacteriophage infection. Probably only responds to cUMP (produced by its cognate NTP cyclase), acts by depleting cellular NAD(+) levels. The chain is Pycsar effector protein PaPycTIR from Pseudomonas aeruginosa.